A 105-amino-acid polypeptide reads, in one-letter code: L-rhamnose mutarotase (105 aa).

Residue Tyr19 coordinates substrate. Catalysis depends on His23, which acts as the Proton donor. Substrate is bound by residues Tyr42 and 77-78; that span reads WW.

It belongs to the rhamnose mutarotase family. As to quaternary structure, homodimer.

Its subcellular location is the cytoplasm. The enzyme catalyses alpha-L-rhamnose = beta-L-rhamnose. It functions in the pathway carbohydrate metabolism; L-rhamnose metabolism. Its function is as follows. Involved in the anomeric conversion of L-rhamnose. The polypeptide is L-rhamnose mutarotase (Mesorhizobium japonicum (strain LMG 29417 / CECT 9101 / MAFF 303099) (Mesorhizobium loti (strain MAFF 303099))).